Reading from the N-terminus, the 148-residue chain is FAD synthase (148 aa).

ATP-binding positions include 14–15 (VF), 19–22 (HAGH), and aspartate 100.

The protein belongs to the archaeal FAD synthase family. In terms of assembly, homodimer. A divalent metal cation is required as a cofactor.

The enzyme catalyses FMN + ATP + H(+) = FAD + diphosphate. The protein operates within cofactor biosynthesis; FAD biosynthesis; FAD from FMN: step 1/1. Functionally, catalyzes the transfer of the AMP portion of ATP to flavin mononucleotide (FMN) to produce flavin adenine dinucleotide (FAD) coenzyme. In Pyrococcus horikoshii (strain ATCC 700860 / DSM 12428 / JCM 9974 / NBRC 100139 / OT-3), this protein is FAD synthase.